A 187-amino-acid chain; its full sequence is Transcription antitermination protein NusB (187 aa).

The interval 135 to 187 (APAPESVAEEADEESSDSDAAASDPTDEGDVSDSSGASDEPAAPSAEIQPTVD) is disordered. The span at 141-151 (VAEEADEESSD) shows a compositional bias: acidic residues.

Belongs to the NusB family.

Involved in transcription antitermination. Required for transcription of ribosomal RNA (rRNA) genes. Binds specifically to the boxA antiterminator sequence of the ribosomal RNA (rrn) operons. The polypeptide is Transcription antitermination protein NusB (Bifidobacterium longum subsp. infantis (strain ATCC 15697 / DSM 20088 / JCM 1222 / NCTC 11817 / S12)).